A 104-amino-acid chain; its full sequence is UPF0145 protein VNG_2432C (104 aa).

This sequence belongs to the UPF0145 family.

The sequence is that of UPF0145 protein VNG_2432C from Halobacterium salinarum (strain ATCC 700922 / JCM 11081 / NRC-1) (Halobacterium halobium).